We begin with the raw amino-acid sequence, 611 residues long: MCGIVGAVAERNITAILLEGLKRLEYRGYDSAGVAVFTNEGVLERRRRSGKVSELEQALAGEPLIGRLGIAHTRWATHGAPCERNAHPHFSADELAVVHNGIIENHEALREQLKSLGYVFVSDTDTEVIVHLLHHKLKDTPDLAVALKSAVKELHGAYGLAVINAAQPDRLLAARSGSPLVIGVGMGENFLASDQLALRQVTDRFMYLEEGDIAEIRRDSVQIWTVDGLPVVREVVQYHEGAEAADKGEYRHFMLKEIHEQPKVVQRTLEGRLGQHQVLVHAFGPQAAELFAKVRNVQIVACGTSYHAGMVARYWLEGLAGIPCQVEVASEFRYRKVVVQPDTLFVSISQSGETADTLAALRNAKELGFLASLAICNVGISSLVRESDLTLLTQAGPEIGVASTKAFTTQLVALLLLTLSLGQVKGSLEEGVEAQLVEELRRLPTRLGEALAMDGTIEKVAELFAEKHHTLFLGRGAQFPVAMEGALKLKEISYIHAEAYPAGELKHGPLALVDADMPVVTVAPNNELLEKLKSNLQEVRARGGELIVFADEQAGMKNGEGTHVIAMPHIIDALAPILYTIPLQLLSYYVAVLKGTDVDQPRNLAKSVTVE.

C2 (nucleophile; for GATase activity) is an active-site residue. In terms of domain architecture, Glutamine amidotransferase type-2 spans 2 to 219; the sequence is CGIVGAVAER…EGDIAEIRRD (218 aa). SIS domains lie at 287–427 and 460–601; these read AAEL…VKGS and VAEL…VDQP. K606 serves as the catalytic For Fru-6P isomerization activity.

As to quaternary structure, homodimer.

It is found in the cytoplasm. It carries out the reaction D-fructose 6-phosphate + L-glutamine = D-glucosamine 6-phosphate + L-glutamate. Functionally, catalyzes the first step in hexosamine metabolism, converting fructose-6P into glucosamine-6P using glutamine as a nitrogen source. In Pseudomonas syringae pv. tomato (strain ATCC BAA-871 / DC3000), this protein is Glutamine--fructose-6-phosphate aminotransferase [isomerizing].